The chain runs to 454 residues: Neuronal acetylcholine receptor subunit alpha-5 (454 aa).

Residues 1–26 (MPLRARSRKPGAGPAARAPQAGVSEP) form a disordered region. An N-terminal signal peptide occupies residues 1–29 (MPLRARSRKPGAGPAARAPQAGVSEPSFV). Residues 10–22 (PGAGPAARAPQAG) are compositionally biased toward low complexity. Residues 30 to 240 (AKSEDRLFKH…IIRRLPLFYT (211 aa)) lie on the Extracellular side of the membrane. Asn55, Asn169, and Asn215 each carry an N-linked (GlcNAc...) asparagine glycan. A disulfide bond links Cys156 and Cys170. A disulfide bridge links Cys220 with Cys221. Transmembrane regions (helical) follow at residues 241–261 (LFLI…FYLP), 270–290 (LCTS…EIIP), and 303–323 (LVFT…AINI). Residues 324 to 416 (HHRSSSTHNA…KFIAQVLDRM (93 aa)) lie on the Cytoplasmic side of the membrane. Residues 417 to 437 (FLWAFLLVSIIGSLVLFIPVI) traverse the membrane as a helical segment. Over 438–454 (HKWASIIVPVHIGSTNT) the chain is Extracellular.

Belongs to the ligand-gated ion channel (TC 1.A.9) family. Acetylcholine receptor (TC 1.A.9.1) subfamily. Alpha-5/CHRNA5 sub-subfamily. Neuronal AChR that forms heteropentamers composed of two different type of subunits: alpha and non-alpha (beta). CHRNA5/alpha-5 subunit is only able to form functional nAChRs when co-assembled with another alpha subunit, can be combined to CHRNA4/alpha-4 or CHRNA3/alpha-3 and CHRNB4/beta-4 or CHRNB2/beta-2 to give rise to functional receptors. Interacts with LYPD6.

Its subcellular location is the synaptic cell membrane. The protein localises to the cell membrane. The catalysed reaction is Ca(2+)(in) = Ca(2+)(out). It carries out the reaction K(+)(in) = K(+)(out). The enzyme catalyses Na(+)(in) = Na(+)(out). Activated by a myriad of ligands such as acetylcholine, cytisine, nicotine, choline and epibatidine. Its function is as follows. Component of neuronal acetylcholine receptors (nAChRs) that function as pentameric, ligand-gated cation channels with high calcium permeability among other activities. nAChRs are excitatory neurotrasnmitter receptors formed by a collection of nAChR subunits known to mediate synaptic transmission in the nervous system and the neuromuscular junction. Each nAchR subunit confers differential attributes to channel properties, including activation, deactivation and desensitization kinetics, pH sensitivity, cation permeability, and binding to allosteric modulators. Has an accessory rather than functional role and is only able to form functional nAChRs when co-assembled with another beta subunit. Participates in pentameric assemblies along with CHRNA3, CHRNA4, CHRNB2 and CHRNB4. Increases receptor sensitivity to acetylcholine and nicotine when associated with CHRNA4 and CHRNB2. Plays a role in nicotine addiction. The polypeptide is Neuronal acetylcholine receptor subunit alpha-5 (CHRNA5) (Gallus gallus (Chicken)).